Reading from the N-terminus, the 260-residue chain is Thiazole synthase (260 aa).

K102 acts as the Schiff-base intermediate with DXP in catalysis. 1-deoxy-D-xylulose 5-phosphate-binding positions include G163, 189–190 (AG), and 211–212 (NT).

It belongs to the ThiG family. In terms of assembly, homotetramer. Forms heterodimers with either ThiH or ThiS.

Its subcellular location is the cytoplasm. It catalyses the reaction [ThiS sulfur-carrier protein]-C-terminal-Gly-aminoethanethioate + 2-iminoacetate + 1-deoxy-D-xylulose 5-phosphate = [ThiS sulfur-carrier protein]-C-terminal Gly-Gly + 2-[(2R,5Z)-2-carboxy-4-methylthiazol-5(2H)-ylidene]ethyl phosphate + 2 H2O + H(+). The protein operates within cofactor biosynthesis; thiamine diphosphate biosynthesis. Functionally, catalyzes the rearrangement of 1-deoxy-D-xylulose 5-phosphate (DXP) to produce the thiazole phosphate moiety of thiamine. Sulfur is provided by the thiocarboxylate moiety of the carrier protein ThiS. In vitro, sulfur can be provided by H(2)S. This chain is Thiazole synthase, found in Geobacter sulfurreducens (strain ATCC 51573 / DSM 12127 / PCA).